The chain runs to 384 residues: tRNA-specific 2-thiouridylase MnmA (384 aa).

ATP contacts are provided by residues 18 to 25 (AMSGGVDS) and L44. The active-site Nucleophile is C112. C112 and C209 form a disulfide bridge. Residue G136 coordinates ATP. The interaction with tRNA stretch occupies residues 159 to 161 (RDQ). C209 (cysteine persulfide intermediate) is an active-site residue.

Belongs to the MnmA/TRMU family.

It is found in the cytoplasm. The catalysed reaction is S-sulfanyl-L-cysteinyl-[protein] + uridine(34) in tRNA + AH2 + ATP = 2-thiouridine(34) in tRNA + L-cysteinyl-[protein] + A + AMP + diphosphate + H(+). Functionally, catalyzes the 2-thiolation of uridine at the wobble position (U34) of tRNA, leading to the formation of s(2)U34. The sequence is that of tRNA-specific 2-thiouridylase MnmA from Methylobacterium radiotolerans (strain ATCC 27329 / DSM 1819 / JCM 2831 / NBRC 15690 / NCIMB 10815 / 0-1).